Here is a 30-residue protein sequence, read N- to C-terminus: Mejucin (30 aa).

It is found in the secreted. Functionally, bacteriocin that inhibits the growth of several Gram-positive bacteria, especially the food-borne pathogens L.monocytogenes, B.cereus strain ATCC 11778, B.cereus strain ATCC 21366, B.cereus strain ATCC 10876 and B.cereus strain ATCC 14579. Likely to act by disrupting the pathogen membrane resulting in leakage of intracellular constituents. Does not inhibit the growth of Gram-negative bacteria. The protein is Mejucin of Bacillus subtilis.